The following is a 72-amino-acid chain: Exodeoxyribonuclease 7 small subunit (72 aa).

This sequence belongs to the XseB family. Heterooligomer composed of large and small subunits.

The protein resides in the cytoplasm. The enzyme catalyses Exonucleolytic cleavage in either 5'- to 3'- or 3'- to 5'-direction to yield nucleoside 5'-phosphates.. Bidirectionally degrades single-stranded DNA into large acid-insoluble oligonucleotides, which are then degraded further into small acid-soluble oligonucleotides. This is Exodeoxyribonuclease 7 small subunit from Ruegeria pomeroyi (strain ATCC 700808 / DSM 15171 / DSS-3) (Silicibacter pomeroyi).